A 39-amino-acid polypeptide reads, in one-letter code: Photosystem II reaction center protein J (39 aa).

A helical membrane pass occupies residues 7–27 (IPLWLIGTIVGILVIGLIGIY).

This sequence belongs to the PsbJ family. As to quaternary structure, PSII is composed of 1 copy each of membrane proteins PsbA, PsbB, PsbC, PsbD, PsbE, PsbF, PsbH, PsbI, PsbJ, PsbK, PsbL, PsbM, PsbT, PsbX, PsbY, PsbZ, Psb30/Ycf12, at least 3 peripheral proteins of the oxygen-evolving complex and a large number of cofactors. It forms dimeric complexes.

Its subcellular location is the plastid. It is found in the chloroplast thylakoid membrane. In terms of biological role, one of the components of the core complex of photosystem II (PSII). PSII is a light-driven water:plastoquinone oxidoreductase that uses light energy to abstract electrons from H(2)O, generating O(2) and a proton gradient subsequently used for ATP formation. It consists of a core antenna complex that captures photons, and an electron transfer chain that converts photonic excitation into a charge separation. The protein is Photosystem II reaction center protein J of Welwitschia mirabilis (Tree tumbo).